A 639-amino-acid polypeptide reads, in one-letter code: Wall-associated receptor kinase-like 15 (639 aa).

The first 25 residues, 1–25, serve as a signal peptide directing secretion; it reads MELPWLSLTTFTLSLLIYFSSTTQA. The Extracellular segment spans residues 26–282; it reads FKRCPNCGST…KRKSCKRWSN (257 aa). Residues Asn-68, Asn-115, Asn-126, Asn-141, and Asn-241 are each glycosylated (N-linked (GlcNAc...) asparagine). A helical transmembrane segment spans residues 283 to 303; sequence LPLLGGLAGGVGAILIAGFIT. The Cytoplasmic portion of the chain corresponds to 304–639; the sequence is KTIVSKQNRR…KEIENILHGI (336 aa). Residues 354–639 form the Protein kinase domain; sequence FAKSNLLGFG…KEIENILHGI (286 aa). Residues 360-368 and Lys-382 each bind ATP; that span reads LGFGGFGEV. The active-site Proton acceptor is Asp-484.

It belongs to the protein kinase superfamily. Ser/Thr protein kinase family.

The protein resides in the membrane. It catalyses the reaction L-seryl-[protein] + ATP = O-phospho-L-seryl-[protein] + ADP + H(+). It carries out the reaction L-threonyl-[protein] + ATP = O-phospho-L-threonyl-[protein] + ADP + H(+). Putative serine/threonine-protein kinase that may function as a signaling receptor of extracellular matrix component. The polypeptide is Wall-associated receptor kinase-like 15 (WAKL15) (Arabidopsis thaliana (Mouse-ear cress)).